The following is a 1210-amino-acid chain: Microtubule-associated tumor suppressor 1 homolog (1210 aa).

Disordered stretches follow at residues 1-21, 370-404, 446-482, 513-545, and 585-618; these read MNDD…IRDK, DPHI…PYEM, VENG…NTTV, QPKD…LTMM, and HSKN…AGSE. Over residues 370–379 the composition is skewed to basic and acidic residues; that stretch reads DPHIDSHDND. Ser-375, Ser-380, and Ser-393 each carry phosphoserine. The segment covering 381–398 has biased composition (polar residues); sequence DIQSSTEELTLRSVSGQR. Positions 446–455 are enriched in basic and acidic residues; sequence VENGPRDAKR. A compositionally biased stretch (polar residues) spans 473–482; that stretch reads KSATKTNTTV. Low complexity predominate over residues 524 to 534; it reads PSPQVTGGSSP. Polar residues predominate over residues 585-605; the sequence is HSKNASLGVPRTTSATKSNQE. Ser-621 is modified (phosphoserine). The interval 683–771 is disordered; that stretch reads SKSLLVGSAP…YEEKPPKQAF (89 aa). The segment covering 692–702 has biased composition (polar residues); the sequence is PKTSTTPGRSS. Residues 876–1171 are a coiled coil; sequence IQHLLSEREE…RLSMENEELL (296 aa). Phosphoserine is present on residues Ser-1143, Ser-1164, Ser-1185, Ser-1195, Ser-1199, Ser-1201, Ser-1203, Ser-1204, and Ser-1208. The tract at residues 1177–1210 is disordered; it reads GDLCSPKRSPTSSAIPFQSPRNSGSFSSPSISPR. The segment covering 1195 to 1210 has biased composition (low complexity); it reads SPRNSGSFSSPSISPR.

Belongs to the MTUS1 family. In terms of assembly, homodimer. Interacts with AGTR2. Interacts with PTPN6. As to expression, ubiquitously expressed, with highest levels in uterus and adrenal gland.

The protein localises to the mitochondrion. It localises to the golgi apparatus. Its subcellular location is the cell membrane. The protein resides in the nucleus. Its function is as follows. Cooperates with AGTR2 to inhibit ERK2 activation and cell proliferation. May be required for AGTR2 cell surface expression. Together with PTPN6, induces UBE2V2 expression upon angiotensin-II stimulation. The protein is Microtubule-associated tumor suppressor 1 homolog (Mtus1) of Mus musculus (Mouse).